The sequence spans 240 residues: MDLFSVRMRAQKNGKHVSGAERIVKKEELETAVKELLNRPKEFDFMNVKVEKVKDFEVVKFNLKISTYSFKSPEEAREFAVKKLTQEGIKEEVAKKAVEILSKGANPKGGNMRGAVLMDIETGERLEEDKERGVRTIHFDWKDRKKVTEKLLKEGYTLRTVDALALTFKNLFCGVVAELCWSDDPDYVTGYVSGKEIGYVRITPLKEKGDPLGGRVYFVSRKELSEIIECLTQKVVLIEL.

The protein belongs to the BioW family. As to quaternary structure, homodimer. It depends on Mg(2+) as a cofactor.

It catalyses the reaction heptanedioate + ATP + CoA = 6-carboxyhexanoyl-CoA + AMP + diphosphate. It participates in metabolic intermediate metabolism; pimeloyl-CoA biosynthesis; pimeloyl-CoA from pimelate: step 1/1. Its function is as follows. Catalyzes the transformation of pimelate into pimeloyl-CoA with concomitant hydrolysis of ATP to AMP. The sequence is that of 6-carboxyhexanoate--CoA ligase from Aquifex aeolicus (strain VF5).